We begin with the raw amino-acid sequence, 447 residues long: Na(+)-translocating NADH-quinone reductase subunit A (447 aa).

Belongs to the NqrA family. Composed of six subunits; NqrA, NqrB, NqrC, NqrD, NqrE and NqrF.

The enzyme catalyses a ubiquinone + n Na(+)(in) + NADH + H(+) = a ubiquinol + n Na(+)(out) + NAD(+). NQR complex catalyzes the reduction of ubiquinone-1 to ubiquinol by two successive reactions, coupled with the transport of Na(+) ions from the cytoplasm to the periplasm. NqrA to NqrE are probably involved in the second step, the conversion of ubisemiquinone to ubiquinol. The polypeptide is Na(+)-translocating NADH-quinone reductase subunit A (Neisseria gonorrhoeae (strain NCCP11945)).